The chain runs to 470 residues: Serine carboxypeptidase ctsa-4.1 (470 aa).

A signal peptide spans 1–19 (MKLLSILFIFVSSYSFCLA). Asparagine 132 carries N-linked (GlcNAc...) asparagine glycosylation. Residue serine 169 is part of the active site. N-linked (GlcNAc...) asparagine glycosylation occurs at asparagine 316. The active site involves aspartate 380. Asparagine 396 carries N-linked (GlcNAc...) asparagine glycosylation. Histidine 441 is a catalytic residue.

This sequence belongs to the peptidase S10 family.

It carries out the reaction Release of a C-terminal amino acid with broad specificity.. This chain is Serine carboxypeptidase ctsa-4.1, found in Caenorhabditis elegans.